Here is a 153-residue protein sequence, read N- to C-terminus: Putative adenylate kinase (153 aa).

ATP contacts are provided by Gly12, Gly14, Lys15, Ser16, and Thr17. Residues 31–47 (EGNELAKEYGCLFDEEV) form an NMP region. The LID stretch occupies residues 94-104 (ARGYSEEKIQE). ATP is bound at residue Arg95.

This sequence belongs to the adenylate kinase family. AK6 subfamily. Interacts with uS11. Not a structural component of 40S pre-ribosomes, but transiently interacts with them by binding to uS11.

It carries out the reaction AMP + ATP = 2 ADP. It catalyses the reaction ATP + H2O = ADP + phosphate + H(+). Functionally, broad-specificity nucleoside monophosphate (NMP) kinase that catalyzes the reversible transfer of the terminal phosphate group between nucleoside triphosphates and monophosphates. Also has ATPase activity. Involved in the late maturation steps of the 30S ribosomal particles, specifically 16S rRNA maturation. While NMP activity is not required for ribosome maturation, ATPase activity is. Associates transiently with small ribosomal subunit protein uS11. ATP hydrolysis breaks the interaction with uS11. May temporarily remove uS11 from the ribosome to enable a conformational change of the ribosomal RNA that is needed for the final maturation step of the small ribosomal subunit. The chain is Putative adenylate kinase from Thermoplasma volcanium (strain ATCC 51530 / DSM 4299 / JCM 9571 / NBRC 15438 / GSS1).